The chain runs to 184 residues: ATP synthase subunit b, chloroplastic (184 aa).

A helical membrane pass occupies residues 27–49 (LATNPINLSVVFGVLIFFGKGVL).

Belongs to the ATPase B chain family. In terms of assembly, F-type ATPases have 2 components, F(1) - the catalytic core - and F(0) - the membrane proton channel. F(1) has five subunits: alpha(3), beta(3), gamma(1), delta(1), epsilon(1). F(0) has four main subunits: a(1), b(1), b'(1) and c(10-14). The alpha and beta chains form an alternating ring which encloses part of the gamma chain. F(1) is attached to F(0) by a central stalk formed by the gamma and epsilon chains, while a peripheral stalk is formed by the delta, b and b' chains.

It localises to the plastid. Its subcellular location is the chloroplast thylakoid membrane. In terms of biological role, f(1)F(0) ATP synthase produces ATP from ADP in the presence of a proton or sodium gradient. F-type ATPases consist of two structural domains, F(1) containing the extramembraneous catalytic core and F(0) containing the membrane proton channel, linked together by a central stalk and a peripheral stalk. During catalysis, ATP synthesis in the catalytic domain of F(1) is coupled via a rotary mechanism of the central stalk subunits to proton translocation. Component of the F(0) channel, it forms part of the peripheral stalk, linking F(1) to F(0). This Draba nemorosa (Woodland whitlowgrass) protein is ATP synthase subunit b, chloroplastic.